We begin with the raw amino-acid sequence, 421 residues long: UDP-N-acetylglucosamine 1-carboxyvinyltransferase 1 (421 aa).

22–23 (KN) serves as a coordination point for phosphoenolpyruvate. Arginine 95 serves as a coordination point for UDP-N-acetyl-alpha-D-glucosamine. Cysteine 119 functions as the Proton donor in the catalytic mechanism. The residue at position 119 (cysteine 119) is a 2-(S-cysteinyl)pyruvic acid O-phosphothioketal. UDP-N-acetyl-alpha-D-glucosamine-binding positions include 124-128 (RPIEQ), aspartate 308, and valine 330.

The protein belongs to the EPSP synthase family. MurA subfamily.

The protein localises to the cytoplasm. It catalyses the reaction phosphoenolpyruvate + UDP-N-acetyl-alpha-D-glucosamine = UDP-N-acetyl-3-O-(1-carboxyvinyl)-alpha-D-glucosamine + phosphate. It participates in cell wall biogenesis; peptidoglycan biosynthesis. Its function is as follows. Cell wall formation. Adds enolpyruvyl to UDP-N-acetylglucosamine. This chain is UDP-N-acetylglucosamine 1-carboxyvinyltransferase 1, found in Staphylococcus epidermidis (strain ATCC 35984 / DSM 28319 / BCRC 17069 / CCUG 31568 / BM 3577 / RP62A).